The chain runs to 142 residues: Large ribosomal subunit protein uL13 (142 aa).

The protein belongs to the universal ribosomal protein uL13 family. As to quaternary structure, part of the 50S ribosomal subunit.

In terms of biological role, this protein is one of the early assembly proteins of the 50S ribosomal subunit, although it is not seen to bind rRNA by itself. It is important during the early stages of 50S assembly. The sequence is that of Large ribosomal subunit protein uL13 from Cupriavidus metallidurans (strain ATCC 43123 / DSM 2839 / NBRC 102507 / CH34) (Ralstonia metallidurans).